The sequence spans 95 residues: uncharacterized protein (95 aa).

3 consecutive transmembrane segments (helical) span residues 3–23 (YTVL…GFSF), 35–55 (ILFL…MMLT), and 63–83 (MLGV…VMII).

It is found in the cell membrane. This is an uncharacterized protein from Mycoplasma pneumoniae (strain ATCC 29342 / M129 / Subtype 1) (Mycoplasmoides pneumoniae).